The sequence spans 441 residues: ATP-dependent RNA helicase sub2 (441 aa).

Low complexity predominate over residues 23–32 (TTAAPAANGD). A disordered region spans residues 23–42 (TTAAPAANGDAAKKGDLTVS). Positions 58–86 (TGFRDFLLKGELLRAITDCGFEHPSEVQQ) match the Q motif motif. The 176-residue stretch at 89 to 264 (IPTAILNVDV…KKFMRNPLEV (176 aa)) folds into the Helicase ATP-binding domain. Residue 102–109 (AKSGLGKT) coordinates ATP. The DECD box signature appears at 211 to 214 (DECD). The Helicase C-terminal domain occupies 292–437 (KLNELLDSLE…EYPEGGVDSS (146 aa)).

This sequence belongs to the DEAD box helicase family. DECD subfamily.

The protein resides in the nucleus. It carries out the reaction ATP + H2O = ADP + phosphate + H(+). Functionally, ATP-binding RNA helicase involved in transcription elongation and required for the export of mRNA out of the nucleus. SUB2 also plays a role in pre-mRNA splicing and spliceosome assembly. May be involved in rDNA and telomeric silencing, and maintenance of genome integrity. This Aspergillus oryzae (strain ATCC 42149 / RIB 40) (Yellow koji mold) protein is ATP-dependent RNA helicase sub2 (sub2).